Reading from the N-terminus, the 82-residue chain is NAD(P)H-quinone oxidoreductase subunit O, organellar chromatophore (82 aa).

It belongs to the complex I NdhO subunit family. NDH-1 can be composed of about 15 different subunits; different subcomplexes with different compositions have been identified which probably have different functions.

The protein resides in the plastid. It is found in the organellar chromatophore thylakoid membrane. It catalyses the reaction a plastoquinone + NADH + (n+1) H(+)(in) = a plastoquinol + NAD(+) + n H(+)(out). The catalysed reaction is a plastoquinone + NADPH + (n+1) H(+)(in) = a plastoquinol + NADP(+) + n H(+)(out). Its function is as follows. NDH-1 shuttles electrons from an unknown electron donor, via FMN and iron-sulfur (Fe-S) centers, to quinones in the respiratory and/or the photosynthetic chain. The immediate electron acceptor for the enzyme in this species is believed to be plastoquinone. Couples the redox reaction to proton translocation, and thus conserves the redox energy in a proton gradient. Cyanobacterial NDH-1 also plays a role in inorganic carbon-concentration. The sequence is that of NAD(P)H-quinone oxidoreductase subunit O, organellar chromatophore from Paulinella chromatophora.